The chain runs to 292 residues: RNA 5'-monophosphate methyltransferase (292 aa).

The tract at residues 1-20 (MAVPTELHGGSVKETAAEKE) is disordered. S-adenosyl-L-methionine contacts are provided by residues arginine 46, asparagine 76, aspartate 110, 135–136 (DF), and methionine 164. The Bin3-type SAM domain maps to 53-274 (ELLRQLFPES…KQTIETHPIP (222 aa)).

Belongs to the methyltransferase superfamily. As to quaternary structure, interacts with DICER1; the interaction may be mediated by RNA.

The protein resides in the cytoplasm. The catalysed reaction is a 5'-end 5'-phospho-ribonucleoside-RNA + S-adenosyl-L-methionine = a 5'-end (5'-methylphospho)-ribonucleoside-RNA + S-adenosyl-L-homocysteine. The enzyme catalyses a 5'-end 5'-phospho-ribonucleoside-RNA + 2 S-adenosyl-L-methionine = a 5'-end (5'-bismethylphospho)-ribonucleoside-RNA + 2 S-adenosyl-L-homocysteine. Its function is as follows. O-methyltransferase that specifically monomethylates 5'-monophosphate of cytoplasmic histidyl tRNA (tRNA(His)), acting as a capping enzyme by protecting tRNA(His) from cleavage by DICER1. Also able, with less efficiently, to methylate the 5' monophosphate of a subset of pre-miRNAs, acting as a negative regulator of miRNA processing. The 5' monophosphate of pre-miRNAs is recognized by DICER1 and is required for pre-miRNAs processing: methylation at this position reduces the processing of pre-miRNAs by DICER1. Was also reported to mediate dimethylation of pre-miR-145; however dimethylation cannot be reproduced by another group which observes a monomethylation of pre-miR-145. This is RNA 5'-monophosphate methyltransferase (BCDIN3D) from Pongo abelii (Sumatran orangutan).